The chain runs to 496 residues: Apolipoprotein N-acyltransferase (496 aa).

6 helical membrane-spanning segments follow: residues 23-43 (GIATSTHFWLLFMPLSLFILW), 50-70 (LANFLWGFFFILVSHSWLYEL), 84-104 (LIISISILFGCSIIGGILVYL), 126-146 (LTIKVLLLSFAWGIGEFILSQ), 171-191 (WIGASGLCVVQLTIGFWIYLI), and 205-225 (FLFGLLILVILHFLGGLTNPI). The CN hydrolase domain maps to 236 to 464 (WQTNMPTREK…NDVVNPNFSI (229 aa)). Glutamate 276 (proton acceptor) is an active-site residue. The active site involves lysine 325. Cysteine 374 (nucleophile) is an active-site residue. A helical transmembrane segment spans residues 476–496 (PLFLLCLFLIGLNLYFGKFTN).

The protein belongs to the CN hydrolase family. Apolipoprotein N-acyltransferase subfamily.

The protein localises to the cell inner membrane. The catalysed reaction is N-terminal S-1,2-diacyl-sn-glyceryl-L-cysteinyl-[lipoprotein] + a glycerophospholipid = N-acyl-S-1,2-diacyl-sn-glyceryl-L-cysteinyl-[lipoprotein] + a 2-acyl-sn-glycero-3-phospholipid + H(+). It functions in the pathway protein modification; lipoprotein biosynthesis (N-acyl transfer). Catalyzes the phospholipid dependent N-acylation of the N-terminal cysteine of apolipoprotein, the last step in lipoprotein maturation. This chain is Apolipoprotein N-acyltransferase, found in Prochlorococcus marinus subsp. pastoris (strain CCMP1986 / NIES-2087 / MED4).